Consider the following 528-residue polypeptide: Protein BFR2 (528 aa).

Disordered regions lie at residues 14–158 (NKSK…ADAK) and 372–401 (DSNS…NNAI). Acidic residues predominate over residues 132 to 146 (DSGDSDSDSGSDAGE).

It belongs to the AATF family.

The protein localises to the nucleus. It localises to the nucleolus. In Eremothecium gossypii (strain ATCC 10895 / CBS 109.51 / FGSC 9923 / NRRL Y-1056) (Yeast), this protein is Protein BFR2 (BFR2).